The sequence spans 219 residues: Protein-L-isoaspartate O-methyltransferase 2 (219 aa).

Residue Ser-66 is part of the active site.

This sequence belongs to the methyltransferase superfamily. L-isoaspartyl/D-aspartyl protein methyltransferase family.

It localises to the cytoplasm. The enzyme catalyses [protein]-L-isoaspartate + S-adenosyl-L-methionine = [protein]-L-isoaspartate alpha-methyl ester + S-adenosyl-L-homocysteine. In terms of biological role, catalyzes the methyl esterification of L-isoaspartyl residues in peptides and proteins that result from spontaneous decomposition of normal L-aspartyl and L-asparaginyl residues. It plays a role in the repair and/or degradation of damaged proteins. The polypeptide is Protein-L-isoaspartate O-methyltransferase 2 (Marinobacter nauticus (strain ATCC 700491 / DSM 11845 / VT8) (Marinobacter aquaeolei)).